Reading from the N-terminus, the 273-residue chain is Putative pyruvate, phosphate dikinase regulatory protein (273 aa).

An ADP-binding site is contributed by 153 to 160 (GISRTSKT).

This sequence belongs to the pyruvate, phosphate/water dikinase regulatory protein family. PDRP subfamily.

It carries out the reaction N(tele)-phospho-L-histidyl/L-threonyl-[pyruvate, phosphate dikinase] + ADP = N(tele)-phospho-L-histidyl/O-phospho-L-threonyl-[pyruvate, phosphate dikinase] + AMP + H(+). It catalyses the reaction N(tele)-phospho-L-histidyl/O-phospho-L-threonyl-[pyruvate, phosphate dikinase] + phosphate + H(+) = N(tele)-phospho-L-histidyl/L-threonyl-[pyruvate, phosphate dikinase] + diphosphate. Bifunctional serine/threonine kinase and phosphorylase involved in the regulation of the pyruvate, phosphate dikinase (PPDK) by catalyzing its phosphorylation/dephosphorylation. The polypeptide is Putative pyruvate, phosphate dikinase regulatory protein (Agrobacterium fabrum (strain C58 / ATCC 33970) (Agrobacterium tumefaciens (strain C58))).